The primary structure comprises 287 residues: Nucleotide-binding protein Dtpsy_0831 (287 aa).

10–17 (GMSGSGKS) contacts ATP. A GTP-binding site is contributed by 59–62 (DVRS).

It belongs to the RapZ-like family.

In terms of biological role, displays ATPase and GTPase activities. This chain is Nucleotide-binding protein Dtpsy_0831, found in Acidovorax ebreus (strain TPSY) (Diaphorobacter sp. (strain TPSY)).